The sequence spans 152 residues: Xanthine-guanine phosphoribosyltransferase (152 aa).

5-phospho-alpha-D-ribose 1-diphosphate contacts are provided by residues 37–38 (RG), R69, and 88–96 (DDLVDTGGT). R69 contacts GMP. D89 provides a ligand contact to Mg(2+). Guanine-binding residues include D92 and I135. D92 and I135 together coordinate xanthine. Residues 92-96 (DTGGT) and 134-135 (WI) contribute to the GMP site.

It belongs to the purine/pyrimidine phosphoribosyltransferase family. XGPT subfamily. In terms of assembly, homotetramer. The cofactor is Mg(2+).

It is found in the cell inner membrane. The enzyme catalyses GMP + diphosphate = guanine + 5-phospho-alpha-D-ribose 1-diphosphate. The catalysed reaction is XMP + diphosphate = xanthine + 5-phospho-alpha-D-ribose 1-diphosphate. It carries out the reaction IMP + diphosphate = hypoxanthine + 5-phospho-alpha-D-ribose 1-diphosphate. It participates in purine metabolism; GMP biosynthesis via salvage pathway; GMP from guanine: step 1/1. Its pathway is purine metabolism; XMP biosynthesis via salvage pathway; XMP from xanthine: step 1/1. Purine salvage pathway enzyme that catalyzes the transfer of the ribosyl-5-phosphate group from 5-phospho-alpha-D-ribose 1-diphosphate (PRPP) to the N9 position of the 6-oxopurines guanine and xanthine to form the corresponding ribonucleotides GMP (guanosine 5'-monophosphate) and XMP (xanthosine 5'-monophosphate), with the release of PPi. To a lesser extent, also acts on hypoxanthine. In Pectobacterium carotovorum subsp. carotovorum (strain PC1), this protein is Xanthine-guanine phosphoribosyltransferase.